The primary structure comprises 474 residues: Chromosomal replication initiator protein DnaA (474 aa).

Positions 1 to 90 (MSSSLWLQCL…RQVVVPSSQI (90 aa)) are domain I, interacts with DnaA modulators. A domain II region spans residues 91–137 (IAPAAPAVTLAPRPLPATRILQDDAPSRSWEPAPSPVQPESKSGYRS). The disordered stretch occupies residues 112–137 (QDDAPSRSWEPAPSPVQPESKSGYRS). Over residues 128 to 137 (QPESKSGYRS) the composition is skewed to polar residues. A domain III, AAA+ region region spans residues 138–354 (NVNPKHNFNN…GALNRVIANA (217 aa)). 4 residues coordinate ATP: glycine 182, glycine 184, lysine 185, and threonine 186. Residues 355-474 (NFTGRAITID…YSNLIRTLST (120 aa)) are domain IV, binds dsDNA.

Belongs to the DnaA family. Oligomerizes as a right-handed, spiral filament on DNA at oriC.

Its subcellular location is the cytoplasm. In terms of biological role, plays an essential role in the initiation and regulation of chromosomal replication. ATP-DnaA binds to the origin of replication (oriC) to initiate formation of the DNA replication initiation complex once per cell cycle. Binds the DnaA box (a 9 base pair repeat at the origin) and separates the double-stranded (ds)DNA. Forms a right-handed helical filament on oriC DNA; dsDNA binds to the exterior of the filament while single-stranded (ss)DNA is stabiized in the filament's interior. The ATP-DnaA-oriC complex binds and stabilizes one strand of the AT-rich DNA unwinding element (DUE), permitting loading of DNA polymerase. After initiation quickly degrades to an ADP-DnaA complex that is not apt for DNA replication. Binds acidic phospholipids. The polypeptide is Chromosomal replication initiator protein DnaA (Photobacterium profundum (strain SS9)).